Consider the following 241-residue polypeptide: Cytochrome b6-f complex iron-sulfur subunit 2, cyanelle (241 aa).

Residues 1–62 (MSAFACSAVA…AAKATTFSIS (62 aa)) constitute a cyanelle transit peptide. A helical transmembrane segment spans residues 83–103 (LLGAIAGPTIGAGGPFVSFLV). One can recognise a Rieske domain in the interval 127–223 (VEKWLETXKP…VNVLEDGVVA (97 aa)). Residues C169, H171, C187, and H190 each coordinate [2Fe-2S] cluster. The cysteines at positions 174 and 189 are disulfide-linked.

This sequence belongs to the Rieske iron-sulfur protein family. As to quaternary structure, the 4 large subunits of the cytochrome b6-f complex are cytochrome b6, subunit IV (17 kDa polypeptide, petD), cytochrome f and the Rieske protein, while the 4 small subunits are petG, petL, petM and petN. The complex functions as a dimer. The cofactor is [2Fe-2S] cluster.

It is found in the plastid. The protein localises to the cyanelle thylakoid membrane. It carries out the reaction 2 oxidized [plastocyanin] + a plastoquinol + 2 H(+)(in) = 2 reduced [plastocyanin] + a plastoquinone + 4 H(+)(out). Its function is as follows. Component of the cytochrome b6-f complex, which mediates electron transfer between photosystem II (PSII) and photosystem I (PSI), cyclic electron flow around PSI, and state transitions. This is Cytochrome b6-f complex iron-sulfur subunit 2, cyanelle (petC-2) from Cyanophora paradoxa.